Consider the following 443-residue polypeptide: Thymidine phosphorylase (443 aa).

This sequence belongs to the thymidine/pyrimidine-nucleoside phosphorylase family. Homodimer.

It catalyses the reaction thymidine + phosphate = 2-deoxy-alpha-D-ribose 1-phosphate + thymine. Its pathway is pyrimidine metabolism; dTMP biosynthesis via salvage pathway; dTMP from thymine: step 1/2. The enzymes which catalyze the reversible phosphorolysis of pyrimidine nucleosides are involved in the degradation of these compounds and in their utilization as carbon and energy sources, or in the rescue of pyrimidine bases for nucleotide synthesis. This is Thymidine phosphorylase from Shewanella oneidensis (strain ATCC 700550 / JCM 31522 / CIP 106686 / LMG 19005 / NCIMB 14063 / MR-1).